The following is a 274-amino-acid chain: MDKYAVFGNPIKHSKSPAIHKQFAISLGEQIDYRAILAPIDNFEKTVSNFFAQGGKGANVTMPFKEQAFAMADELTPLAKIVGAVNTLKKQADGTLLGDNTDGIGFVSDLLANNVSITGKRILIIGAGGAARGVVLPLLDHQPQEVVIVNRTAEKAQNLAKLFAQHGNVSGYGFNNLPENDYALIINSTSSSMNDELPALDQKHITNCEVAYDMFYSLQNTIFMNWVAQYNSKTKLLDGSGMLVGQAAQAYYVWRNKMPAILPVVNALKQGALT.

Shikimate-binding positions include 14–16 (SKS) and T61. Residue K65 is the Proton acceptor of the active site. Positions 86 and 102 each coordinate shikimate. NADP(+)-binding positions include 126–130 (GAGGA), 150–155 (NRTAEK), and M214. Y216 provides a ligand contact to shikimate. Residue G239 coordinates NADP(+).

It belongs to the shikimate dehydrogenase family. Homodimer.

The catalysed reaction is shikimate + NADP(+) = 3-dehydroshikimate + NADPH + H(+). It functions in the pathway metabolic intermediate biosynthesis; chorismate biosynthesis; chorismate from D-erythrose 4-phosphate and phosphoenolpyruvate: step 4/7. Involved in the biosynthesis of the chorismate, which leads to the biosynthesis of aromatic amino acids. Catalyzes the reversible NADPH linked reduction of 3-dehydroshikimate (DHSA) to yield shikimate (SA). This chain is Shikimate dehydrogenase (NADP(+)), found in Pseudoalteromonas translucida (strain TAC 125).